The following is a 481-amino-acid chain: G-protein coupled receptor 37-like 1 (481 aa).

The signal sequence occupies residues 1–24; sequence MRWLWPLAVSLAVVLAVGPSEVSG. Topologically, residues 25–134 are extracellular; that stretch reads AATLSLGGHR…ESSYSAYAVM (110 aa). Disordered stretches follow at residues 30-55 and 76-107; these read LGGH…GPKE and LQPT…TNLT. A compositionally biased stretch (polar residues) spans 95 to 107; sequence TSESGQELRTNLT. The N-linked (GlcNAc...) asparagine glycan is linked to asparagine 105. A helical membrane pass occupies residues 135–155; that stretch reads LLALVVFAVGIVGNLSVMCIV. Residues 156–167 are Cytoplasmic-facing; the sequence is WHSYYLKSAWNS. Residues 168–188 traverse the membrane as a helical segment; that stretch reads ILASLALWDFLVLFFCLPIVI. Over 189–205 the chain is Extracellular; sequence FNEITKQRLLGDVSCRA. Cysteine 203 and cysteine 286 form a disulfide bridge. A helical transmembrane segment spans residues 206 to 226; the sequence is VPFMEVSSLGVTTFSLCALGI. The Cytoplasmic segment spans residues 227-251; it reads DRFHVATSTLPKVRPIERCQSILAK. A helical transmembrane segment spans residues 252 to 272; the sequence is LAVIWVGSMMLAVPELLLWQL. The Extracellular portion of the chain corresponds to 273-310; that stretch reads AQEPTPTMGTVDSCIMKPSADLPESLYSLVMTYQNARM. A helical membrane pass occupies residues 311–331; it reads WWYFGCYFCLPILFTVTCQLV. The Cytoplasmic segment spans residues 332–360; the sequence is TWRVRGPPGRKPECRAGRHEQCESQLNST. Residues 361-381 form a helical membrane-spanning segment; sequence VVGLTVVYAFCTLPENICNIV. The Extracellular segment spans residues 382–398; it reads VAYLSTELTRQTLDLLG. Residues 399–419 traverse the membrane as a helical segment; that stretch reads LINQFSTFFKGAITPVLLLCI. Topologically, residues 420–481 are cytoplasmic; that stretch reads CRPLGQAFLD…PPLLPLGTPC (62 aa). Phosphoserine is present on serine 471. A Phosphothreonine modification is found at threonine 479.

Belongs to the G-protein coupled receptor 1 family. As to quaternary structure, interacts with the PTCH1 receptor. Post-translationally, undergoes metalloprotease-mediated cleavage which reduces its constitutive activity. Ubiquitinated. Highly expressed in brain.

The protein localises to the cell membrane. It is found in the cell projection. The protein resides in the cilium membrane. G-protein coupled receptor. Has been shown to bind the neuroprotective and glioprotective factor prosaposin (PSAP), leading to endocytosis followed by an ERK phosphorylation cascade. However, other studies have shown that prosaposin does not increase activity. It has been suggested that GPR37L1 is a constitutively active receptor which signals through the guanine nucleotide-binding protein G(s) subunit alpha. Participates in the regulation of postnatal cerebellar development by modulating the Shh pathway. Regulates baseline blood pressure in females and protects against cardiovascular stress in males. Mediates inhibition of astrocyte glutamate transporters and reduction in neuronal N-methyl-D-aspartate receptor activity. The polypeptide is G-protein coupled receptor 37-like 1 (Gpr37l1) (Rattus norvegicus (Rat)).